Reading from the N-terminus, the 257-residue chain is MSQIEFKDVNKVYPNGHVGLKDINLNIEKGDFAVIVGLSGAGKSTLLRSVNRLHDITSGDILIEGKSITKAKGNDLLMMRRNIGMIFQHFNLVKRSSVLRNVLSGRVGYHPTWKMVLGLFPKEDKVKAMDALERVNILDKYDQRSDELSGGQQQRISIARALAQEPAIILADEPVASLDPLTTKQVMDDLKKINEELGITILINLHFVDLALEYGTRIIGLRAGELVFDGPASEATEEVFNDIYGRKLKDDEKLGVE.

Residues Ile-4 to Leu-248 form the ABC transporter domain. Position 37 to 44 (Gly-37 to Ser-44) interacts with ATP.

This sequence belongs to the ABC transporter superfamily. Phosphonates importer (TC 3.A.1.9.1) family. In terms of assembly, the complex is composed of two ATP-binding proteins (PhnC), two transmembrane proteins (PhnE) and a solute-binding protein (PhnD).

Its subcellular location is the cell membrane. The catalysed reaction is phosphonate(out) + ATP + H2O = phosphonate(in) + ADP + phosphate + H(+). Functionally, part of the ABC transporter complex PhnCDE involved in phosphonates import. Responsible for energy coupling to the transport system. This chain is Phosphonates import ATP-binding protein PhnC, found in Staphylococcus haemolyticus (strain JCSC1435).